Reading from the N-terminus, the 363-residue chain is Ribosomal RNA large subunit methyltransferase M (363 aa).

Residues S190, 223–226, D242, D262, and D279 each bind S-adenosyl-L-methionine; that span reads CPGG. The Proton acceptor role is filled by K308.

Belongs to the class I-like SAM-binding methyltransferase superfamily. RNA methyltransferase RlmE family. RlmM subfamily. In terms of assembly, monomer.

It localises to the cytoplasm. It carries out the reaction cytidine(2498) in 23S rRNA + S-adenosyl-L-methionine = 2'-O-methylcytidine(2498) in 23S rRNA + S-adenosyl-L-homocysteine + H(+). Its function is as follows. Catalyzes the 2'-O-methylation at nucleotide C2498 in 23S rRNA. This is Ribosomal RNA large subunit methyltransferase M from Vibrio vulnificus (strain CMCP6).